A 178-amino-acid chain; its full sequence is Relaxin-like protein SQ10 (178 aa).

Residues 1 to 20 form the signal peptide; the sequence is MPALLFYLLGFCLLQGQVTG. 3 disulfides stabilise this stretch: Cys34/Cys165, Cys46/Cys178, and Cys164/Cys169. A propeptide spans 54–150 (connecting peptide); sequence ESPSPENPFL…SSASESNTFS (97 aa).

Belongs to the insulin family. As to quaternary structure, heterodimer of a B chain and an A chain linked by two disulfide bonds.

It localises to the secreted. In Oryctolagus cuniculus (Rabbit), this protein is Relaxin-like protein SQ10.